A 399-amino-acid polypeptide reads, in one-letter code: Protein shisa-8 (399 aa).

The signal sequence occupies residues 1 to 36; the sequence is MERAGARGQRCGRRSHGLPLALRLALLLAGSPSGRA. Topologically, residues 37–136 are extracellular; the sequence is GAPEEQEIAG…APRDPARERS (100 aa). Residue N73 is glycosylated (N-linked (GlcNAc...) asparagine). Residues 137 to 157 form a helical membrane-spanning segment; the sequence is HTAVYAVCGVAALLVLVGIGA. Topologically, residues 158-399 are cytoplasmic; that stretch reads RLGLERAHSP…STNSKAEVTV (242 aa). 2 disordered regions span residues 207–248 and 378–399; these read GDGV…GGSL and FYSSAGRGPRHLSTNSKAEVTV. The span at 389-399 shows a compositional bias: polar residues; it reads LSTNSKAEVTV.

This sequence belongs to the shisa family. Interacts with AMPAR subunits GRIA1 and GRIA2. As to expression, brain-specific. Highly expressed in cerebellum and olfactory bulb.

It localises to the membrane. In terms of biological role, may regulate trafficking and current kinetics of AMPA-type glutamate receptor (AMPAR) at synapses. In Mus musculus (Mouse), this protein is Protein shisa-8.